A 210-amino-acid polypeptide reads, in one-letter code: ATP-dependent Clp protease proteolytic subunit (210 aa).

Ser-106 (nucleophile) is an active-site residue. His-131 is a catalytic residue.

The protein belongs to the peptidase S14 family. As to quaternary structure, fourteen ClpP subunits assemble into 2 heptameric rings which stack back to back to give a disk-like structure with a central cavity, resembling the structure of eukaryotic proteasomes.

The protein resides in the cytoplasm. It catalyses the reaction Hydrolysis of proteins to small peptides in the presence of ATP and magnesium. alpha-casein is the usual test substrate. In the absence of ATP, only oligopeptides shorter than five residues are hydrolyzed (such as succinyl-Leu-Tyr-|-NHMec, and Leu-Tyr-Leu-|-Tyr-Trp, in which cleavage of the -Tyr-|-Leu- and -Tyr-|-Trp bonds also occurs).. In terms of biological role, cleaves peptides in various proteins in a process that requires ATP hydrolysis. Has a chymotrypsin-like activity. Plays a major role in the degradation of misfolded proteins. This chain is ATP-dependent Clp protease proteolytic subunit, found in Afipia carboxidovorans (strain ATCC 49405 / DSM 1227 / KCTC 32145 / OM5) (Oligotropha carboxidovorans).